A 155-amino-acid chain; its full sequence is MTYNTNTSLSSYAGLSAFALSVFCILWGTARTGSFLKEKALITCAADILARQAPELGVTSRTLRMVPSSPIPQAEVLRGKKNTGEEIFLYFFPLRGMYGSFPTLFLYDKKDGARFCHLIGNHPTPRDARFYGISSARIALQCRKIEHLHQTVAYE.

A signal peptide spans Met1–Ala30.

This is an uncharacterized protein from Treponema pallidum (strain Nichols).